The primary structure comprises 205 residues: Imidazoleglycerol-phosphate dehydratase (205 aa).

Belongs to the imidazoleglycerol-phosphate dehydratase family.

Its subcellular location is the cytoplasm. The catalysed reaction is D-erythro-1-(imidazol-4-yl)glycerol 3-phosphate = 3-(imidazol-4-yl)-2-oxopropyl phosphate + H2O. Its pathway is amino-acid biosynthesis; L-histidine biosynthesis; L-histidine from 5-phospho-alpha-D-ribose 1-diphosphate: step 6/9. The chain is Imidazoleglycerol-phosphate dehydratase from Chloroflexus aggregans (strain MD-66 / DSM 9485).